The chain runs to 133 residues: CDGSH iron-sulfur domain-containing protein 2 homolog (133 aa).

The Lumenal segment spans residues 1–35 (MEPISHLVKSSLPNYLSSLPIPDSIGGWFKLSFKD). The helical transmembrane segment at 36–58 (WLALIPPTVVVAGLGYTAYLAYC) threads the bilayer. At 59–133 (PAAQGSCSAK…DNVGPIVIKK (75 aa)) the chain is on the cytoplasmic side. [2Fe-2S] cluster contacts are provided by C100, C102, C111, and H115.

Belongs to the CISD protein family. CISD2 subfamily. Requires [2Fe-2S] cluster as cofactor.

The protein localises to the endoplasmic reticulum membrane. The protein is CDGSH iron-sulfur domain-containing protein 2 homolog of Drosophila erecta (Fruit fly).